Here is a 227-residue protein sequence, read N- to C-terminus: Lipoprotein-releasing system ATP-binding protein LolD (227 aa).

The ABC transporter domain maps to 6 to 227 (LEMRGITKSY…RLDAGQLSDV (222 aa)). 43–50 (APSGAGKS) provides a ligand contact to ATP.

Belongs to the ABC transporter superfamily. Lipoprotein translocase (TC 3.A.1.125) family. As to quaternary structure, the complex is composed of two ATP-binding proteins (LolD) and two transmembrane proteins (LolC and LolE).

Its subcellular location is the cell inner membrane. Functionally, part of the ABC transporter complex LolCDE involved in the translocation of mature outer membrane-directed lipoproteins, from the inner membrane to the periplasmic chaperone, LolA. Responsible for the formation of the LolA-lipoprotein complex in an ATP-dependent manner. This is Lipoprotein-releasing system ATP-binding protein LolD from Roseobacter denitrificans (strain ATCC 33942 / OCh 114) (Erythrobacter sp. (strain OCh 114)).